Reading from the N-terminus, the 519-residue chain is 3-octaprenyl-4-hydroxybenzoate carboxy-lyase (519 aa).

Asn177 is a Mn(2+) binding site. Prenylated FMN is bound by residues 180–182 (IYR), 194–196 (RWL), and 199–200 (RG). Glu243 provides a ligand contact to Mn(2+). The active-site Proton donor is the Asp318.

This sequence belongs to the UbiD family. As to quaternary structure, homohexamer. Prenylated FMN serves as cofactor. It depends on Mn(2+) as a cofactor.

It is found in the cell membrane. It carries out the reaction a 4-hydroxy-3-(all-trans-polyprenyl)benzoate + H(+) = a 2-(all-trans-polyprenyl)phenol + CO2. The protein operates within cofactor biosynthesis; ubiquinone biosynthesis. Its function is as follows. Catalyzes the decarboxylation of 3-octaprenyl-4-hydroxy benzoate to 2-octaprenylphenol, an intermediate step in ubiquinone biosynthesis. This Burkholderia thailandensis (strain ATCC 700388 / DSM 13276 / CCUG 48851 / CIP 106301 / E264) protein is 3-octaprenyl-4-hydroxybenzoate carboxy-lyase.